Consider the following 329-residue polypeptide: DNA-directed RNA polymerase subunit alpha (329 aa).

The interval 1 to 235 (MQGSVTEFLK…EQLEAFVDLR (235 aa)) is alpha N-terminal domain (alpha-NTD). Positions 249 to 329 (FDPILLRPVD…NWPPASIADE (81 aa)) are alpha C-terminal domain (alpha-CTD).

The protein belongs to the RNA polymerase alpha chain family. As to quaternary structure, homodimer. The RNAP catalytic core consists of 2 alpha, 1 beta, 1 beta' and 1 omega subunit. When a sigma factor is associated with the core the holoenzyme is formed, which can initiate transcription.

It catalyses the reaction RNA(n) + a ribonucleoside 5'-triphosphate = RNA(n+1) + diphosphate. In terms of biological role, DNA-dependent RNA polymerase catalyzes the transcription of DNA into RNA using the four ribonucleoside triphosphates as substrates. The polypeptide is DNA-directed RNA polymerase subunit alpha (Pectobacterium atrosepticum (strain SCRI 1043 / ATCC BAA-672) (Erwinia carotovora subsp. atroseptica)).